The chain runs to 101 residues: Ubiquitin-like protein SMT3 (101 aa).

Residue Ser-2 is modified to N-acetylserine. Residues Ser-2 and Ser-4 each carry the phosphoserine modification. Residues 22 to 98 form the Ubiquitin-like domain; sequence THINLKVSDG…IEAHREQIGG (77 aa). Gly-98 is covalently cross-linked (Glycyl lysine isopeptide (Gly-Lys) (interchain with K-? in acceptor proteins)). A propeptide spanning residues 99–101 is cleaved from the precursor; sequence ATY.

It belongs to the ubiquitin family. SUMO subfamily. In terms of assembly, activated by a E1 ligase composed of AOS1 and UBA2.

Not known; suppressor of MIF2 mutations. This Saccharomyces cerevisiae (strain ATCC 204508 / S288c) (Baker's yeast) protein is Ubiquitin-like protein SMT3 (SMT3).